We begin with the raw amino-acid sequence, 636 residues long: Interleukin-27 receptor subunit alpha (636 aa).

The N-terminal stretch at 1–32 is a signal peptide; that stretch reads MRGGRGAPFWLWPLPKLALLPLLWVLFQRTRP. At 33-516 the chain is on the extracellular side; that stretch reads QGSAGPLQCY…HLPDNTLRWK (484 aa). Residues Asn51 and Asn76 are each glycosylated (N-linked (GlcNAc...) asparagine). One can recognise a Fibronectin type-III 1 domain in the interval 131–231; that stretch reads PRLGPDVDFS…PILSFQTPPS (101 aa). Positions 217-221 match the WSXWS motif motif; it reads WGEWS. Residues Asn302, Asn311, Asn374, Asn382, and Asn467 are each glycosylated (N-linked (GlcNAc...) asparagine). Fibronectin type-III domains lie at 322 to 417 and 419 to 511; these read APRS…LAPL and GPTL…LPDN. A helical membrane pass occupies residues 517–537; that stretch reads VLPGILFLWGLFLLGCGLSLA. Over 538 to 636 the chain is Cytoplasmic; sequence TSGRCYHLRH…LGPPRPQVLA (99 aa). The short motif at 554 to 562 is the Box 1 motif element; that stretch reads VWEKVPDPA. The disordered stretch occupies residues 587-636; the sequence is EVEEMEPPPVMESSQPAQATAPLDSGYEKHFLPTPEELGLLGPPRPQVLA. Residues 618 to 628 show a composition bias toward low complexity; it reads LPTPEELGLLG.

Belongs to the type I cytokine receptor family. Type 2 subfamily. Component of a receptor complex composed of IL6ST/GP130, IL27RA/WSX1 and CNTFR which interacts with the neuroprotective peptide humanin. As to expression, highly expressed in lymphoid tissues such as spleen, lymph nodes and peripheral blood leukocytes. Weakly expressed in other tissues examined including heart, brain, fetal and adult lung, liver, skeletal muscle, kidney, pancreas, prostate, testis, ovary, small intestine, kidney and colon. In the lymphoid system, higher level expression in CD4+ T-cell subsets than in CD8+ T-cell subsets. Also weaker expression in CD19+ B-cells and monocytes.

Its subcellular location is the membrane. In terms of biological role, receptor for IL27. Requires IL6ST/GP130 to mediate signal transduction in response to IL27. This signaling system acts through STAT3 and STAT1. Acts as a receptor for the neuroprotective peptide humanin as part of a complex with IL6ST/GP130 and CNTFR. Involved in the regulation of Th1-type immune responses. Also appears to be involved in innate defense mechanisms. This is Interleukin-27 receptor subunit alpha (IL27RA) from Homo sapiens (Human).